Consider the following 354-residue polypeptide: Uroporphyrinogen decarboxylase (354 aa).

Residues 27–31, Phe-46, Asp-77, Tyr-153, Thr-208, and His-326 each bind substrate; that span reads RQAGR.

The protein belongs to the uroporphyrinogen decarboxylase family. Homodimer.

Its subcellular location is the cytoplasm. The enzyme catalyses uroporphyrinogen III + 4 H(+) = coproporphyrinogen III + 4 CO2. The protein operates within porphyrin-containing compound metabolism; protoporphyrin-IX biosynthesis; coproporphyrinogen-III from 5-aminolevulinate: step 4/4. Functionally, catalyzes the decarboxylation of four acetate groups of uroporphyrinogen-III to yield coproporphyrinogen-III. This is Uroporphyrinogen decarboxylase from Neisseria meningitidis serogroup B (strain ATCC BAA-335 / MC58).